A 689-amino-acid polypeptide reads, in one-letter code: Glycine--tRNA ligase beta subunit (689 aa).

It belongs to the class-II aminoacyl-tRNA synthetase family. As to quaternary structure, tetramer of two alpha and two beta subunits.

It is found in the cytoplasm. The catalysed reaction is tRNA(Gly) + glycine + ATP = glycyl-tRNA(Gly) + AMP + diphosphate. The polypeptide is Glycine--tRNA ligase beta subunit (Salmonella paratyphi C (strain RKS4594)).